A 630-amino-acid polypeptide reads, in one-letter code: YTH domain-containing family protein 1 (630 aa).

3 disordered regions span residues 38–113, 160–183, and 200–241; these read DMTQ…YMQQ, YYPQ…AGPY, and QVGD…QSGH. Polar residues predominate over residues 70 to 102; it reads PGQQQQHQYGSPPNTNGNAQPMPQAHGNNTMNS. The YTH domain occupies 382–590; the sequence is EKYFILKSLT…SVGRKLTGLF (209 aa).

It belongs to the YTHDF family. YTHDF1 subfamily.

It localises to the cytoplasm. Its subcellular location is the P-body. In terms of biological role, specifically recognizes and binds N6-methyladenosine (m6A)-containing mRNAs, and regulates their stability. M6A is a modification present at internal sites of mRNAs and some non-coding RNAs and plays a role in mRNA stability and processing. Plays a role in pathogenicity towards plant host. The chain is YTH domain-containing family protein 1 from Pyricularia oryzae (strain 70-15 / ATCC MYA-4617 / FGSC 8958) (Rice blast fungus).